The sequence spans 449 residues: Tubulin alpha chain (449 aa).

GTP is bound at residue glutamine 11. Lysine 40 is subject to N6-acetyllysine. Residues glutamate 71, serine 140, glycine 144, threonine 145, threonine 179, asparagine 206, and asparagine 228 each contribute to the GTP site. A Mg(2+)-binding site is contributed by glutamate 71. Glutamate 254 is a catalytic residue.

This sequence belongs to the tubulin family. In terms of assembly, dimer of alpha and beta chains. A typical microtubule is a hollow water-filled tube with an outer diameter of 25 nm and an inner diameter of 15 nM. Alpha-beta heterodimers associate head-to-tail to form protofilaments running lengthwise along the microtubule wall with the beta-tubulin subunit facing the microtubule plus end conferring a structural polarity. Microtubules usually have 13 protofilaments but different protofilament numbers can be found in some organisms and specialized cells. Requires Mg(2+) as cofactor. Post-translationally, undergoes a tyrosination/detyrosination cycle, the cyclic removal and re-addition of a C-terminal tyrosine residue by the enzymes tubulin tyrosine carboxypeptidase (TTCP) and tubulin tyrosine ligase (TTL), respectively. In terms of processing, acetylation of alpha chains at Lys-40 stabilizes microtubules and affects affinity and processivity of microtubule motors. This modification has a role in multiple cellular functions, ranging from cell motility, cell cycle progression or cell differentiation to intracellular trafficking and signaling.

Its subcellular location is the cytoplasm. The protein localises to the cytoskeleton. The catalysed reaction is GTP + H2O = GDP + phosphate + H(+). Its function is as follows. Tubulin is the major constituent of microtubules, a cylinder consisting of laterally associated linear protofilaments composed of alpha- and beta-tubulin heterodimers. Microtubules grow by the addition of GTP-tubulin dimers to the microtubule end, where a stabilizing cap forms. Below the cap, tubulin dimers are in GDP-bound state, owing to GTPase activity of alpha-tubulin. This is Tubulin alpha chain from Tetrahymena pyriformis.